Consider the following 591-residue polypeptide: NADPH oxidase 1 (591 aa).

Over 1 to 36 the chain is Cytoplasmic; the sequence is MAGELRGSRGPLQRIQIAPREAPNLHLTMGNWLVNH. Residues 37–59 traverse the membrane as a helical segment; sequence WLSVLFLVSWLGLNIFLFVYAFL. Topologically, residues 60–72 are extracellular; the sequence is NYEKSDKYYYTRE. Residues 73 to 97 form a helical membrane-spanning segment; it reads ILGTALALARASALCLNFNSMMILI. Positions 82–316 constitute a Ferric oxidoreductase domain; that stretch reads RASALCLNFN…YIFERILRFY (235 aa). The Cytoplasmic portion of the chain corresponds to 98 to 130; that stretch reads PVCRNLLSFLRGTCSFCNRTLRKPLDHNLTFHK. Residues histidine 129 and histidine 143 each contribute to the heme site. Residues 131–151 traverse the membrane as a helical segment; the sequence is LVAYMICIFTVIHIIAHLFNF. Residues 152 to 195 are Extracellular-facing; that stretch reads ERYRRSQQAMDGSLASVLSSLSHPEKEDSWLNPIQSPNMTVMYA. Residue asparagine 189 is glycosylated (N-linked (GlcNAc...) asparagine). A helical membrane pass occupies residues 196 to 216; sequence AFTSIAGLTGVIATVALVLMV. Over 217–234 the chain is Cytoplasmic; it reads TSAMEFIRRNYFELFWYT. Residues 235–255 traverse the membrane as a helical segment; sequence HHLFIVYIICLGIHGLGGIVR. Histidine 236 and histidine 248 together coordinate heme. Residues 256–423 are Extracellular-facing; the sequence is GQTEESLGES…TVSEDVFQYE (168 aa). Asparagine 269 is a glycosylation site (N-linked (GlcNAc...) asparagine). In terms of domain architecture, FAD-binding FR-type spans 317-418; that stretch reads RSQQKVVITK…DGPFGTVSED (102 aa). Position 365–371 (365–371) interacts with FAD; sequence HPFTLTS. The chain crosses the membrane as a helical span at residues 424 to 444; sequence VAVLVGAGIGVTPFASILKSI. The interaction with NOXO1 stretch occupies residues 424–563; sequence VAVLVGAGIG…GVFLCGPRTL (140 aa). Residues 445 to 591 are Cytoplasmic-facing; sequence WYKFQRADNK…VQFYFNKETF (147 aa). Threonine 457 carries the phosphothreonine modification.

In terms of assembly, NOX1, NOXA1, NOXO1, RAC1 and CYBA forms a functional multimeric complex supporting ROS production. Interacts with NOXO1. Interacts (via FAD-binding FR-type domain) with ARHGEF7 (via PH domain). Interacts with NOXA1. FAD is required as a cofactor. In terms of processing, phosphorylation at Thr-457 mediated by PKC/PRKBC positively regulates its interaction with NOXA1 and enzyme activity. In terms of tissue distribution, expressed in colon and vascular smooth muscle cells (VSMC).

The protein localises to the cell projection. It localises to the invadopodium membrane. Its subcellular location is the cell membrane. The catalysed reaction is NADPH + 2 O2 = 2 superoxide + NADP(+) + H(+). With respect to regulation, the oxidase activity is potentiated by NOXA1 and NOXO1. Functionally, NADPH oxidase that catalyzes the generation of superoxide from molecular oxygen utilizing NADPH as an electron donor. The chain is NADPH oxidase 1 (Nox1) from Mus musculus (Mouse).